Reading from the N-terminus, the 398-residue chain is Cytochrome b (398 aa).

Transmembrane regions (helical) follow at residues 38–58, 82–104, 119–139, and 185–205; these read FGPL…FLAM, WFLR…FHMF, VRCS…IGYV, and FFSL…LHLG. 2 residues coordinate heme b: His88 and His102. Heme b contacts are provided by His189 and His203. His208 is an a ubiquinone binding site. Helical transmembrane passes span 231–251, 295–316, 328–348, and 355–374; these read YYVK…IFIF, AGGV…FLNQ, IYHI…WIGC, and FVTI…AIMP.

Belongs to the cytochrome b family. In terms of assembly, the main subunits of complex b-c1 are: cytochrome b, cytochrome c1 and the Rieske protein. Heme b serves as cofactor.

The protein resides in the mitochondrion inner membrane. Component of the ubiquinol-cytochrome c reductase complex (complex III or cytochrome b-c1 complex) that is part of the mitochondrial respiratory chain. The b-c1 complex mediates electron transfer from ubiquinol to cytochrome c. Contributes to the generation of a proton gradient across the mitochondrial membrane that is then used for ATP synthesis. This is Cytochrome b (MT-CYB) from Daucus carota (Wild carrot).